The chain runs to 134 residues: Holo-[acyl-carrier-protein] synthase (134 aa).

Residues aspartate 8 and glutamate 57 each contribute to the Mg(2+) site.

This sequence belongs to the P-Pant transferase superfamily. AcpS family. Requires Mg(2+) as cofactor.

The protein localises to the cytoplasm. It catalyses the reaction apo-[ACP] + CoA = holo-[ACP] + adenosine 3',5'-bisphosphate + H(+). In terms of biological role, transfers the 4'-phosphopantetheine moiety from coenzyme A to a Ser of acyl-carrier-protein. The protein is Holo-[acyl-carrier-protein] synthase of Agrobacterium fabrum (strain C58 / ATCC 33970) (Agrobacterium tumefaciens (strain C58)).